A 213-amino-acid polypeptide reads, in one-letter code: Kynurenine formamidase (213 aa).

Substrate is bound at residue tryptophan 15. Zn(2+) contacts are provided by histidine 45, histidine 49, and aspartate 51. Histidine 55 serves as the catalytic Proton donor/acceptor. Histidine 157 and glutamate 169 together coordinate Zn(2+).

Belongs to the Cyclase 1 superfamily. KynB family. Homodimer. It depends on Zn(2+) as a cofactor.

It catalyses the reaction N-formyl-L-kynurenine + H2O = L-kynurenine + formate + H(+). Its pathway is amino-acid degradation; L-tryptophan degradation via kynurenine pathway; L-kynurenine from L-tryptophan: step 2/2. Its function is as follows. Catalyzes the hydrolysis of N-formyl-L-kynurenine to L-kynurenine, the second step in the kynurenine pathway of tryptophan degradation. The chain is Kynurenine formamidase from Deinococcus geothermalis (strain DSM 11300 / CIP 105573 / AG-3a).